A 156-amino-acid chain; its full sequence is Probable cyclic pyranopterin monophosphate synthase (156 aa).

Substrate is bound by residues 74–76 (LCH) and 110–111 (ME). D125 is an active-site residue.

It belongs to the MoaC family. As to quaternary structure, homohexamer; trimer of dimers.

The enzyme catalyses (8S)-3',8-cyclo-7,8-dihydroguanosine 5'-triphosphate = cyclic pyranopterin phosphate + diphosphate. It participates in cofactor biosynthesis; molybdopterin biosynthesis. Functionally, catalyzes the conversion of (8S)-3',8-cyclo-7,8-dihydroguanosine 5'-triphosphate to cyclic pyranopterin monophosphate (cPMP). In Thermococcus kodakarensis (strain ATCC BAA-918 / JCM 12380 / KOD1) (Pyrococcus kodakaraensis (strain KOD1)), this protein is Probable cyclic pyranopterin monophosphate synthase.